Reading from the N-terminus, the 161-residue chain is MTSSSESTRKGLTKIATNRLQKEFMEWQTNPPSGFKHRVSDNLQRWIIEVHGVPGTLYANETYQLQVEFPEHYPMEAPQVIFQHPAPLHPHIYSNGHICLDVLYDSWSPAMRLSSICLSILSMLSSSSVKQKPKDNDHYLKNCKHGRSPKETRWRFHDDKV.

The UBC core domain occupies 15 to 161; it reads IATNRLQKEF…TRWRFHDDKV (147 aa). Cys99 serves as the catalytic Glycyl thioester intermediate.

This sequence belongs to the ubiquitin-conjugating enzyme family.

The enzyme catalyses S-ubiquitinyl-[E1 ubiquitin-activating enzyme]-L-cysteine + [E2 ubiquitin-conjugating enzyme]-L-cysteine = [E1 ubiquitin-activating enzyme]-L-cysteine + S-ubiquitinyl-[E2 ubiquitin-conjugating enzyme]-L-cysteine.. Its pathway is protein modification; protein ubiquitination. Its function is as follows. Accepts the ubiquitin from the E1 complex and catalyzes its covalent attachment to other proteins. The chain is Probable ubiquitin-conjugating enzyme E2 17 (UBC17) from Arabidopsis thaliana (Mouse-ear cress).